Reading from the N-terminus, the 372-residue chain is Glutamate 5-kinase (372 aa).

Lys-14 contacts ATP. Substrate is bound by residues Ser-54, Asp-141, and Asn-153. Residues 173-174 (TD) and 215-221 (TGGMITK) each bind ATP. Residues 280–358 (AGRLLLDDGA…REIEAALGYI (79 aa)) form the PUA domain.

This sequence belongs to the glutamate 5-kinase family.

Its subcellular location is the cytoplasm. It carries out the reaction L-glutamate + ATP = L-glutamyl 5-phosphate + ADP. It functions in the pathway amino-acid biosynthesis; L-proline biosynthesis; L-glutamate 5-semialdehyde from L-glutamate: step 1/2. Functionally, catalyzes the transfer of a phosphate group to glutamate to form L-glutamate 5-phosphate. This chain is Glutamate 5-kinase, found in Chromobacterium violaceum (strain ATCC 12472 / DSM 30191 / JCM 1249 / CCUG 213 / NBRC 12614 / NCIMB 9131 / NCTC 9757 / MK).